The chain runs to 283 residues: Pantothenate synthetase (283 aa).

An ATP-binding site is contributed by 30-37 (MGNLHAGH). Histidine 37 (proton donor) is an active-site residue. Residue glutamine 61 coordinates (R)-pantoate. Position 61 (glutamine 61) interacts with beta-alanine. 149 to 152 (GQKD) contributes to the ATP binding site. (R)-pantoate is bound at residue glutamine 155. Residues valine 178 and 186-189 (LSSR) contribute to the ATP site.

Belongs to the pantothenate synthetase family. Homodimer.

It localises to the cytoplasm. The catalysed reaction is (R)-pantoate + beta-alanine + ATP = (R)-pantothenate + AMP + diphosphate + H(+). The protein operates within cofactor biosynthesis; (R)-pantothenate biosynthesis; (R)-pantothenate from (R)-pantoate and beta-alanine: step 1/1. Functionally, catalyzes the condensation of pantoate with beta-alanine in an ATP-dependent reaction via a pantoyl-adenylate intermediate. The sequence is that of Pantothenate synthetase from Hydrogenovibrio crunogenus (strain DSM 25203 / XCL-2) (Thiomicrospira crunogena).